A 233-amino-acid chain; its full sequence is Ciliary microtubule inner protein 6 (233 aa).

2 stretches are compositionally biased toward basic and acidic residues: residues 1–14 (MEGE…KTED) and 21–33 (AERK…EKSP). The interval 1 to 45 (MEGEEKQQQHKTEDDGIACVAERKVEIKNEKSPGKSTQHPKPCVD) is disordered. Residues 127–159 (GIVPLTSLDVSGEHENNFVEYISFIHQYDARRT) are mn. Residues 192-233 (LLNTLESGSSEQPQKTDKGNSSGDKVTSPGLCQQNSQELLET) are disordered. Positions 195 to 233 (TLESGSSEQPQKTDKGNSSGDKVTSPGLCQQNSQELLET) are enriched in polar residues.

It localises to the cell projection. The protein resides in the cilium. This Mus musculus (Mouse) protein is Ciliary microtubule inner protein 6 (Cimip6).